The chain runs to 144 residues: Cytochrome c oxidase subunit 4 isoform 1, mitochondrial (144 aa).

Over 1–73 (SVVKSEDYTL…SFAEMNRGSN (73 aa)) the chain is Mitochondrial matrix. An N6-acetyllysine; alternate modification is found at K4. N6-succinyllysine; alternate is present on K4. Phosphoserine occurs at positions 31 and 33. K35 is modified (N6-acetyllysine; alternate). K35 is modified (N6-succinyllysine; alternate). K42 bears the N6-acetyllysine mark. A helical transmembrane segment spans residues 74–99 (EWKTVVGAAMFFIGFTAILIMLEKRY). Residues 100–144 (VYGPLPHTFDKEWVAMQTKRMLDLKVNPVDGLASKWDYEKKEWKK) lie on the Mitochondrial intermembrane side of the membrane.

The protein belongs to the cytochrome c oxidase IV family. As to quaternary structure, component of the cytochrome c oxidase (complex IV, CIV), a multisubunit enzyme composed of 14 subunits. The complex is composed of a catalytic core of 3 subunits MT-CO1, MT-CO2 and MT-CO3, encoded in the mitochondrial DNA, and 11 supernumerary subunits COX4I, COX5A, COX5B, COX6A, COX6B, COX6C, COX7A, COX7B, COX7C, COX8 and NDUFA4, which are encoded in the nuclear genome. The complex exists as a monomer or a dimer and forms supercomplexes (SCs) in the inner mitochondrial membrane with NADH-ubiquinone oxidoreductase (complex I, CI) and ubiquinol-cytochrome c oxidoreductase (cytochrome b-c1 complex, complex III, CIII), resulting in different assemblies (supercomplex SCI(1)III(2)IV(1) and megacomplex MCI(2)III(2)IV(2)). Interacts with PHB2; the interaction decreases in absence of SPHK2. Interacts with AFG1L. Interacts with ABCB7; this interaction allows the regulation of cellular iron homeostasis and cellular reactive oxygen species (ROS) levels in cardiomyocytes. Interacts with FLVCR2; this interaction occurs in the absence of heme and is disrupted upon heme binding. Interacts with IRGC.

Its subcellular location is the mitochondrion inner membrane. Its pathway is energy metabolism; oxidative phosphorylation. In terms of biological role, component of the cytochrome c oxidase, the last enzyme in the mitochondrial electron transport chain which drives oxidative phosphorylation. The respiratory chain contains 3 multisubunit complexes succinate dehydrogenase (complex II, CII), ubiquinol-cytochrome c oxidoreductase (cytochrome b-c1 complex, complex III, CIII) and cytochrome c oxidase (complex IV, CIV), that cooperate to transfer electrons derived from NADH and succinate to molecular oxygen, creating an electrochemical gradient over the inner membrane that drives transmembrane transport and the ATP synthase. Cytochrome c oxidase is the component of the respiratory chain that catalyzes the reduction of oxygen to water. Electrons originating from reduced cytochrome c in the intermembrane space (IMS) are transferred via the dinuclear copper A center (CU(A)) of subunit 2 and heme A of subunit 1 to the active site in subunit 1, a binuclear center (BNC) formed by heme A3 and copper B (CU(B)). The BNC reduces molecular oxygen to 2 water molecules using 4 electrons from cytochrome c in the IMS and 4 protons from the mitochondrial matrix. In Pithecia pithecia (White-faced saki), this protein is Cytochrome c oxidase subunit 4 isoform 1, mitochondrial (COX4I1).